Here is a 753-residue protein sequence, read N- to C-terminus: Polyribonucleotide nucleotidyltransferase (753 aa).

Mg(2+) contacts are provided by aspartate 488 and aspartate 494. In terms of domain architecture, KH spans 555-614 (PKLYTMKINPEKIRDVIGKGGSTIRALTEETGTQIDIGEDGTITIASSDAAKADEAKRRI). The S1 motif domain occupies 624–692 (GKIYEGPVTK…EKGRVKLSLK (69 aa)). The interval 692–753 (KALTERPAGM…EGEQQQQQQQ (62 aa)) is disordered. The segment covering 699 to 739 (AGMERSDRPAPAEREFRQPREPRQQREFREPREPREPRDGG) has biased composition (basic and acidic residues).

It belongs to the polyribonucleotide nucleotidyltransferase family. The cofactor is Mg(2+).

It is found in the cytoplasm. It carries out the reaction RNA(n+1) + phosphate = RNA(n) + a ribonucleoside 5'-diphosphate. Its function is as follows. Involved in mRNA degradation. Catalyzes the phosphorolysis of single-stranded polyribonucleotides processively in the 3'- to 5'-direction. This Delftia acidovorans (strain DSM 14801 / SPH-1) protein is Polyribonucleotide nucleotidyltransferase.